Consider the following 768-residue polypeptide: Cullin-3 (768 aa).

Residues 677 to 698 (VAAKQGESDPERKETRQKVDDD) are disordered. The segment covering 682–698 (GESDPERKETRQKVDDD) has biased composition (basic and acidic residues). A Cullin neddylation domain is found at 698 to 760 (DRKHEIEAAI…REYLARTPED (63 aa)). A Glycyl lysine isopeptide (Lys-Gly) (interchain with G-Cter in NEDD8) cross-link involves residue K712.

It belongs to the cullin family. In terms of assembly, component of multiple BCR (BTB-CUL3-RBX1) E3 ubiquitin-protein ligase complexes formed of cul3, rbx1 and a variable BTB domain-containing protein acting as both, adapter to cullin and substrate recognition subunit. Interacts with btbd6. Post-translationally, neddylated. Attachment of NEDD8 is required for the E3 ubiquitin-protein ligase activity of the SCF-like complex.

The protein resides in the nucleus. It functions in the pathway protein modification; protein ubiquitination. Probable core component of cullin-based SCF-like E3 ubiquitin-protein ligase complexes which mediate the ubiquitination and subsequent proteasomal degradation of target proteins. The E3 ubiquitin-protein ligase activity of the complex is dependent on the neddylation of the cullin subunit. Involved in ER-Golgi transport by regulating the size of COPII coats, thereby playing a key role in collagen export, which is required for embryonic stem (ES) cells division. May play a role in the regulation of mittotic entry via ubiquitination of aurka. The chain is Cullin-3 (cul3) from Xenopus tropicalis (Western clawed frog).